A 513-amino-acid chain; its full sequence is Noroxomaritidine synthase 2 (513 aa).

The chain crosses the membrane as a helical span at residues 14-34 (HYPEILIAIACFLIFSLLLSA). Cys458 is a heme binding site.

It belongs to the cytochrome P450 family. It depends on heme as a cofactor. In terms of tissue distribution, mostly expressed in stems, and, to a lower extent, in bulbs, roots, leaves and flowers.

The protein resides in the membrane. It carries out the reaction 4'-O-methylnorbelladine + reduced [NADPH--hemoprotein reductase] + O2 = (10bR,4aS)-noroxomaritidine + oxidized [NADPH--hemoprotein reductase] + 2 H2O + H(+). The enzyme catalyses 4'-O-methylnorbelladine + reduced [NADPH--hemoprotein reductase] + O2 = (10bS,4aR)-noroxomaritidine + oxidized [NADPH--hemoprotein reductase] + 2 H2O + H(+). Its pathway is alkaloid biosynthesis. In terms of biological role, cytochrome P450 that catalyzes an intramolecular para-para' C-C phenol coupling of 4'-O-methylnorbelladine in alkaloids biosynthesis, including haemanthamine- and crinamine-type alkaloids, promising anticancer agents. Catalyzes the formation of (10bR,4aS)-noroxomaritidine and (10bS,4aR)-noroxomaritidine from 4'-O-methylnorbelladine. In Narcissus pseudonarcissus (Daffodil), this protein is Noroxomaritidine synthase 2.